Consider the following 526-residue polypeptide: Estrogen receptor beta (526 aa).

The interval 1–145 (MDIKNSPSNL…SPSSKRDAHF (145 aa)) is modulating. 2 positions are modified to phosphoserine; by MAPK: S84 and S102. 2 consecutive NR C4-type zinc fingers follow at residues 146–166 (CAVCSDYASGYHYGVWSCEGC) and 182–206 (CPATNQCTIDKNRRKSCQACRLRKC). Residues 146-211 (CAVCSDYASG…RLRKCYEVGM (66 aa)) constitute a DNA-binding region (nuclear receptor). The NR LBD domain occupies 261 to 494 (SPEQLVLTLL…DLLLEMLNAH (234 aa)). The disordered stretch occupies residues 502–526 (LVTGSERSRMEESESKEGSQKPQAQ). Over residues 507 to 520 (ERSRMEESESKEGS) the composition is skewed to basic and acidic residues.

Belongs to the nuclear hormone receptor family. NR3 subfamily. As to quaternary structure, binds DNA as a homodimer. Can form a heterodimer with ESR1. Interacts with NCOA1, NCOA3, NCOA5 and NCOA6 coactivators, leading to a strong increase of transcription of target genes. Interacts with UBE1C and AKAP13. Interacts with DNTTIP2. Interacts with CCDC62 in the presence of estradiol/E2; this interaction seems to enhance the transcription of target genes. Interacts with DNAAF4. Interacts with PRMT2. Interacts with CCAR2 (via N-terminus) in a ligand-independent manner. Interacts with RBM39, in the presence of estradiol (E2). Interacts with STUB1/CHIP. In terms of processing, phosphorylation at Ser-84 and Ser-102 recruits NCOA1.

The protein localises to the nucleus. In terms of biological role, nuclear hormone receptor. Binds estrogens with an affinity similar to that of ESR1/ER-alpha, and activates expression of reporter genes containing estrogen response elements (ERE) in an estrogen-dependent manner. The protein is Estrogen receptor beta (ESR2) of Sus scrofa (Pig).